Reading from the N-terminus, the 360-residue chain is Protein DVR-1 (360 aa).

Positions 1–16 (MVWLRLWAFLHILAIV) are cleaved as a signal peptide. Residues 17–246 (TLDPELKRRE…LRCKRPRRKR (230 aa)) constitute a propeptide that is removed on maturation. N-linked (GlcNAc...) asparagine glycans are attached at residues N113, N181, and N301. Disulfide bonds link C259-C325, C288-C357, and C292-C359.

Belongs to the TGF-beta family. Homodimer. Vegetal region of the egg.

The protein resides in the secreted. In terms of biological role, serves to facilitate the differentiation of either mesoderm or endoderm either as a cofactor in an instructive signal or by providing permissive environment. This is Protein DVR-1 (dvr1) from Xenopus laevis (African clawed frog).